The primary structure comprises 736 residues: MIKKTLPVLILLALSGSFSTAVAADKKETQNFYYPETLDLTPLRLHSPESNPWGADFDYATRFQQLDMEALKKDIKDLLTTSQDWWPADYGHYGPFFIRMAWHGAGTYRTYDGRGGASGGQQRFEPLNSWPDNVNLDKARRLLWPVKKKYGSSISWGDLMVLTGNVALESMGFKTLGFAGGREDDWESDLVYWGPDNKPLADNRDKNGKLQKPLAATQMGLIYVNPEGPGGKPDPLASAKDIREAFSRMAMDDEETVALIAGGHTFGKAHGAASPEKCIGAGPDGAPVEEQGLGWKNKCGTGNGKYTITSGLEGAWSTSPTQFTMQYLKNLYKYEWELHKSPAGAYQWKPKKAANIVQDAHDPSVLHPLMMFTTDIALKVDPEYKKITTRFLNDPKAFEQAFARAWFKLTHRDMGPAARYLGNEVPAESFIWQDPLPAADYTMIDGKDIKSLKEQVMDLGIPASELIKTAWASASTFRVTDYRGGNNGARIRLQPEINWEVNEPEKLKKVLASLTSLQREFNKKQSDGKKVSLADLIVLSGNAAIEDAARKAGVELEIPFTPGRTDASQEQTDVASFSVLEPTADGFRNYYSKSRSHISPVESLIDKASQLDLTVPEMTALLGGLRVMDINTNNSSLGVFTDTPGVLDNKFFVNLLDMSTRWSKADKEDTYNGFDRKTGALKWKASSVDLIFSSNPELRAVAEVYASDDARNKFIHDFVKSWNKVMNSDRFDLNNK.

Positions 1–23 (MIKKTLPVLILLALSGSFSTAVA) are cleaved as a signal peptide. The tryptophyl-tyrosyl-methioninium (Trp-Tyr) (with M-249) cross-link spans 102–223 (WHGAGTYRTY…LAATQMGLIY (122 aa)). Residue His103 is the Proton acceptor of the active site. Positions 223-249 (YVNPEGPGGKPDPLASAKDIREAFSRM) form a cross-link, tryptophyl-tyrosyl-methioninium (Tyr-Met) (with W-102). His264 is a binding site for heme b.

It belongs to the peroxidase family. Peroxidase/catalase subfamily. Homodimer or homotetramer. It depends on heme b as a cofactor. Post-translationally, formation of the three residue Trp-Tyr-Met cross-link is important for the catalase, but not the peroxidase activity of the enzyme.

Its subcellular location is the periplasm. The catalysed reaction is H2O2 + AH2 = A + 2 H2O. It catalyses the reaction 2 H2O2 = O2 + 2 H2O. Bifunctional enzyme with both catalase and broad-spectrum peroxidase activity. The sequence is that of Catalase-peroxidase 2 from Escherichia coli O157:H7.